A 142-amino-acid polypeptide reads, in one-letter code: Large ribosomal subunit protein uL13 (142 aa).

It belongs to the universal ribosomal protein uL13 family. Part of the 50S ribosomal subunit.

Its function is as follows. This protein is one of the early assembly proteins of the 50S ribosomal subunit, although it is not seen to bind rRNA by itself. It is important during the early stages of 50S assembly. The polypeptide is Large ribosomal subunit protein uL13 (Bordetella bronchiseptica (strain ATCC BAA-588 / NCTC 13252 / RB50) (Alcaligenes bronchisepticus)).